Consider the following 408-residue polypeptide: Glutathione-independent formaldehyde dehydrogenase (408 aa).

A Zn(2+)-binding site is contributed by Cys61. Gly62, Ser63, and His66 together coordinate NAD(+). Residues His82, Cys112, Cys115, Cys118, Cys126, and Asp184 each contribute to the Zn(2+) site. Val212, Asp232, Arg237, Val277, His284, Pro311, Leu313, Gly348, and Thr350 together coordinate NAD(+).

This sequence belongs to the zinc-containing alcohol dehydrogenase family. Zn(2+) serves as cofactor.

The enzyme catalyses formaldehyde + NAD(+) + H2O = formate + NADH + 2 H(+). With respect to regulation, activity is not inhibited by EDTA, which is probably not sufficient to displace the bound metal. Functionally, dehydrogenase that catalyzes the NAD(+)-dependent oxidation of formaldehyde. Exhibits lower activity with acetaldehyde (about 10-fold lower than for formaldehyde), but cannot use methanol, ethanol, 1-butanol, glyoxal or formic acid. Is involved in formaldehyde detoxification. The chain is Glutathione-independent formaldehyde dehydrogenase from Bacillus subtilis (strain 168).